The sequence spans 445 residues: Amino-acid acetyltransferase (445 aa).

One can recognise an N-acetyltransferase domain in the interval 299-438 (EQVRQAQIDD…QGLYNYQRNS (140 aa)).

The protein belongs to the acetyltransferase family. ArgA subfamily.

The protein resides in the cytoplasm. It carries out the reaction L-glutamate + acetyl-CoA = N-acetyl-L-glutamate + CoA + H(+). The protein operates within amino-acid biosynthesis; L-arginine biosynthesis; N(2)-acetyl-L-ornithine from L-glutamate: step 1/4. The polypeptide is Amino-acid acetyltransferase (Vibrio atlanticus (strain LGP32) (Vibrio splendidus (strain Mel32))).